Consider the following 131-residue polypeptide: Large ribosomal subunit protein uL14m (131 aa).

It belongs to the universal ribosomal protein uL14 family. As to quaternary structure, component of the mitochondrial large ribosomal subunit (mt-LSU). Mature N.crassa 74S mitochondrial ribosomes consist of a small (37S) and a large (54S) subunit. The 37S small subunit contains a 16S ribosomal RNA (16S mt-rRNA) and 32 different proteins. The 54S large subunit contains a 23S rRNA (23S mt-rRNA) and 42 different proteins.

It localises to the mitochondrion. Functionally, component of the mitochondrial ribosome (mitoribosome), a dedicated translation machinery responsible for the synthesis of mitochondrial genome-encoded proteins, including at least some of the essential transmembrane subunits of the mitochondrial respiratory chain. The mitoribosomes are attached to the mitochondrial inner membrane and translation products are cotranslationally integrated into the membrane. This chain is Large ribosomal subunit protein uL14m (mrpl38), found in Neurospora crassa (strain ATCC 24698 / 74-OR23-1A / CBS 708.71 / DSM 1257 / FGSC 987).